The sequence spans 151 residues: Large ribosomal subunit protein uL13 (151 aa).

Belongs to the universal ribosomal protein uL13 family. In terms of assembly, part of the 50S ribosomal subunit.

Functionally, this protein is one of the early assembly proteins of the 50S ribosomal subunit, although it is not seen to bind rRNA by itself. It is important during the early stages of 50S assembly. The polypeptide is Large ribosomal subunit protein uL13 (Synechococcus elongatus (strain ATCC 33912 / PCC 7942 / FACHB-805) (Anacystis nidulans R2)).